A 99-amino-acid polypeptide reads, in one-letter code: UPF0473 protein Athe_1150 (99 aa).

This sequence belongs to the UPF0473 family.

In Caldicellulosiruptor bescii (strain ATCC BAA-1888 / DSM 6725 / KCTC 15123 / Z-1320) (Anaerocellum thermophilum), this protein is UPF0473 protein Athe_1150.